A 2288-amino-acid chain; its full sequence is MKGHQFKSWIFELREILKEIKNSRYFLDSWTQFNSAGFLIHIFFHQESFIKLLDSRIWSILLSRNSQGSTSNRYFTIKYVVLFVVAVLIYRINNRKMVERKNPYLTRLLPIPMNSIGPKNDTLEESSESSNINRLIVPLLYLPKGKKISESSFLDPKESTRVLPITKKYIMPEFNWGSRWWRNWIGKKSYSSCKISNETIAGIEISFKEKDIKYLEFLFVYYMDDPIRKDHDWEFFDRLSPRKRRNIINLNSGQLFEILVKDWIYYLMFAFREKIPKEVEGFFKQQGTGSIIQSNDIEHVSHLFLRNKRAISLQNCAQFHMWQFRQDLFVSWGKSPHESDFLRNMSQENWIWLDNVWLGNKDRFFSKVRNVSSNLQYDSTRSSFIQVTDSSQLKGSSDQSKDSFDSIRNEDSKYHTLINQREIQQLKERSILCWDPSFLQTERTEIESERFLKNLSGYSSMCRLFMEREKQMNNHLLPEEIEEFLGNPARATRSFFSDRWSELHLGSNPTDRSTRDQKLLKKEQKKHLALSRRSEKKEIVNLFKIIMYLQNTVSIHPISSYRGCDMVPKDELDSSNKISFLNKNPFWGFFHLFHDRNRGRYTLHHDFESEDLFQEMADLFTLSITEPDLVYHKEFDFSIDSSGLDQKHFLNELLNSRDESKKHSLLVLPPLFYEQNESFYRRIIKKWVQTSCGNNLEDPKPKIVVFASNNIMEAVNQYRLIRNLIQIQYSTHVYIRNVLNRFNCNFEYGIQRYQIGNDTLNHRTRMKYTINQHFSNLKKSQKKWFDPLILISRTERSMNWDPNAYRYKWSNGSKNFQEHLDYFISEQNSLQVVFDRLHINQYSIDWSEVIDKKDLSKSLCLFLSKLLLFLPKFLLFLSNSLPSFFFVSFGGISIHRSEIHIYELKGPNDPLCNQLLESIGLQIFHLKKRKPLLLDDQDTSQKSKFLINGGTISPFLFNKIPKWMIDSFHTRKNRRKSFDNTDSYFSMISHDPDNWLNPVKPFHRSSLIYYFYKANQLRFLNNQYHFCFYCNKRFPFYVEKARINNYDFTYGQFLKILFIRNKIFSFCDGQKKHAFLKRDTISPIELQVSNILIPNDFPQSGDEGYNFYKSFHFPIRYDPFVRGAIYSIADISGTPLTEGQIVHFEKTYCQPLSDMNIPDSEGKNLYQYLNFNSNMGWIHTPCSEKYLPSEKRKKRSSCLQKCLEKGQMYRTFQQDSVFSTLSKWNLFQTYIPWFLTSTGYKYLNFIFLDTFSDLLPILSSSQKFVSIFHDIMHGSDILWRIRQIPLCLPQWNLISEIPGNCFHNLLLSEEMTHRNNELLLISTHLRSLNVQEFFYSILFLLLVAGYLVRTHLLFVSRVYSELQTEFEKVKSLMIPSYMIELRKLLDRYPTSELNSFWLKNLFLVALEQLGDSLEEIRSFAFGGNMLWGGGPAYGVKSIRSKNKSWNLIDLISIIPNPINRIAFSRNTRHLSHPSKAIYSLIRKIKNVNGDWIDDQIESWVSNTDSIDDKEKEFLVQFSTLTTEKRIDQILLSLTHSDLLSKNNSGYQISEQPGAIYLRYLVDIHKKYLMIYEFNTSCLVERHIFLANYQTITYSQTLWGANSFHFPSHGKPFSLRLALPPPSRGILVIGSIGTGRSYLVKYLAKNSYVPFITVFLNKFLDNKPKGFLIDDSDDIDDSDDSDDIDRDLDIELELLTMMNTLTMDMMPEIDRFYITFHFELAKAMSPCIIWIPNIHDLDVNESNYLSLGLLVNYLSRDCERCSTRNILVIASTHIPQKVDPALIAPNQFNTCIKIRRLLIPQQRKHFFTLSYTRGFHLEKKMSHTNGFGSTTMGSNVRDLVALNNEALSISIIQKKSIIDTNIISSVLHRQTWDFRSQVRSVQDHGILFYQIGRAVSQNVLLSNCSIDPISIYMKKKSCDGGDSYLYKWYFELGTSMKKLTILLYLLSCSAGSVAQDLWSLPGPDEKNGITSYGLVENNSDLVHGLLEVEGALVGSSRTEKDCSQFDKDRVTLLLRSEPRNPLNRIQNGSYSIVDQRFLYEKYESEFEERGGVLDPQQIEEDFFNHIVWAPRIWRPWGFLFDCIERPNSLGFPYWARSFRDKRIIYDEEDELQENDSEFLQGGTMQYQTRDRSSKEQGFFRISQFIWDPADPLFFLFKDQPFVSVFSHRQFFTDEEMSRELLTSQTDLPTSIYKHWFIKNTQEKHFELLIHCQRWLRINSSSSKGFFPSNTLSESYQYLSNLFLSNEALLDQMTKTLLRKRWLFPDEIVVAICSNNESLVSLNHSKKKNR.

1629–1636 (GSIGTGRS) contacts ATP.

This sequence belongs to the Ycf2 family.

It is found in the plastid. Its subcellular location is the chloroplast stroma. Functionally, probable ATPase of unknown function. Its presence in a non-photosynthetic plant (Epifagus virginiana) and experiments in tobacco indicate that it has an essential function which is probably not related to photosynthesis. The sequence is that of Protein Ycf2 from Phaseolus vulgaris (Kidney bean).